The sequence spans 181 residues: Protein Syd (181 aa).

Belongs to the Syd family.

It is found in the cell inner membrane. Functionally, interacts with the SecY protein in vivo. May bind preferentially to an uncomplexed state of SecY, thus functioning either as a chelating agent for excess SecY in the cell or as a regulatory factor that negatively controls the translocase function. The protein is Protein Syd of Cronobacter sakazakii (strain ATCC BAA-894) (Enterobacter sakazakii).